Reading from the N-terminus, the 513-residue chain is ATP synthase subunit alpha (513 aa).

Residue 169 to 176 (GDRQTGKT) participates in ATP binding.

Belongs to the ATPase alpha/beta chains family. As to quaternary structure, F-type ATPases have 2 components, CF(1) - the catalytic core - and CF(0) - the membrane proton channel. CF(1) has five subunits: alpha(3), beta(3), gamma(1), delta(1), epsilon(1). CF(0) has three main subunits: a(1), b(2) and c(9-12). The alpha and beta chains form an alternating ring which encloses part of the gamma chain. CF(1) is attached to CF(0) by a central stalk formed by the gamma and epsilon chains, while a peripheral stalk is formed by the delta and b chains.

The protein resides in the cell inner membrane. It catalyses the reaction ATP + H2O + 4 H(+)(in) = ADP + phosphate + 5 H(+)(out). Its function is as follows. Produces ATP from ADP in the presence of a proton gradient across the membrane. The alpha chain is a regulatory subunit. The sequence is that of ATP synthase subunit alpha from Bordetella avium (strain 197N).